We begin with the raw amino-acid sequence, 679 residues long: Protein FAM178B (679 aa).

The disordered stretch occupies residues 70 to 113; that stretch reads PLDQGPRCPARRPCSPASAPAPTSPKKPKIQAPGETFPTDWSPP. Low complexity predominate over residues 75–90; it reads PRCPARRPCSPASAPA.

Belongs to the FAM178 family.

This chain is Protein FAM178B, found in Homo sapiens (Human).